The primary structure comprises 443 residues: 3-phosphoshikimate 1-carboxyvinyltransferase (443 aa).

3 residues coordinate 3-phosphoshikimate: lysine 24, serine 25, and arginine 29. Lysine 24 contacts phosphoenolpyruvate. The phosphoenolpyruvate site is built by glycine 95 and arginine 123. Residues serine 167, glutamine 169, aspartate 323, and lysine 350 each coordinate 3-phosphoshikimate. Glutamine 169 provides a ligand contact to phosphoenolpyruvate. The Proton acceptor role is filled by aspartate 323. 2 residues coordinate phosphoenolpyruvate: arginine 354 and arginine 398.

It belongs to the EPSP synthase family. Monomer.

The protein localises to the cytoplasm. It catalyses the reaction 3-phosphoshikimate + phosphoenolpyruvate = 5-O-(1-carboxyvinyl)-3-phosphoshikimate + phosphate. It functions in the pathway metabolic intermediate biosynthesis; chorismate biosynthesis; chorismate from D-erythrose 4-phosphate and phosphoenolpyruvate: step 6/7. Functionally, catalyzes the transfer of the enolpyruvyl moiety of phosphoenolpyruvate (PEP) to the 5-hydroxyl of shikimate-3-phosphate (S3P) to produce enolpyruvyl shikimate-3-phosphate and inorganic phosphate. The polypeptide is 3-phosphoshikimate 1-carboxyvinyltransferase (Caulobacter vibrioides (strain ATCC 19089 / CIP 103742 / CB 15) (Caulobacter crescentus)).